The following is a 440-amino-acid chain: Streptokinase C (440 aa).

An N-terminal signal peptide occupies residues 1–26; it reads MKNYLSFGMFALLFALTFGTVNSVQA.

In terms of biological role, this protein is not a protease, but it activates plasminogen by complexing with it. As a potential virulence factor, it is thought to prevent the formation of effective fibrin barriers around the site of infection, thereby contributing to the invasiveness of the cells. In Streptococcus dysgalactiae subsp. equisimilis (Streptococcus equisimilis), this protein is Streptokinase C (skc).